The following is a 237-amino-acid chain: MKYDRPIIALDFPDKEKTFEFLKKFPEDEKLFVKVGMELFYSEGSDMVKELISEGHDVFLDLKLHDIPNTVKQAMKVIGKLGVKLTTVHISGGSEMLIAAKEGLLDGANGDTNTKILGITQLTSTDEEMVKNEQKLSISLKESVKNYAKIAQKSGLDGVVCSAEESDMIYKLTGDDFLRITPGIRLAGGDVGDQKRVMTPDAAARNHSSGIVVGRAITKAENPLDSYRLVTKLWREK.

Substrate-binding positions include Asp-11, Lys-34, 61 to 70, Thr-123, Arg-185, Gln-194, Gly-214, and Arg-215; that span reads DLKLHDIPNT. The active-site Proton donor is the Lys-63.

Belongs to the OMP decarboxylase family. Type 1 subfamily. Homodimer.

The enzyme catalyses orotidine 5'-phosphate + H(+) = UMP + CO2. It participates in pyrimidine metabolism; UMP biosynthesis via de novo pathway; UMP from orotate: step 2/2. In terms of biological role, catalyzes the decarboxylation of orotidine 5'-monophosphate (OMP) to uridine 5'-monophosphate (UMP). In Ligilactobacillus salivarius (strain UCC118) (Lactobacillus salivarius), this protein is Orotidine 5'-phosphate decarboxylase.